A 218-amino-acid chain; its full sequence is Trimethylamine corrinoid protein 2 (218 aa).

The B12-binding N-terminal domain maps to 1-92 (MAGKEEIIAK…EMEKRKSQTK (92 aa)). In terms of domain architecture, B12-binding spans 94 to 218 (LGTVIIGTIE…AKVKAALKVG (125 aa)). His107 is a binding site for methylcob(III)alamin.

The protein belongs to the methylamine corrinoid protein family. In terms of assembly, can form a complex with MttB.

It functions in the pathway one-carbon metabolism; methanogenesis from trimethylamine. In terms of biological role, acts probably as a methyl group carrier between MttB and either MtbA or MtaA. In Methanosarcina mazei (strain ATCC BAA-159 / DSM 3647 / Goe1 / Go1 / JCM 11833 / OCM 88) (Methanosarcina frisia), this protein is Trimethylamine corrinoid protein 2 (mttC2).